Reading from the N-terminus, the 777-residue chain is Reticulon-1 (777 aa).

4 disordered regions span residues Met1–Ser77, Asn129–Asp182, Thr198–Gly245, and Ala293–Pro573. 2 positions are modified to phosphoserine: Ser13 and Ser68. Basic and acidic residues predominate over residues Arg199–Gly233. Phosphoserine occurs at positions 210, 241, and 325. Residues Pro326 to Ser339 show a composition bias toward low complexity. Phosphoserine is present on residues Ser348 and Ser350. Positions Ile393–Ser406 are enriched in polar residues. Phosphoserine is present on Ser485. The segment covering Ala495–Pro510 has biased composition (basic and acidic residues). A compositionally biased stretch (polar residues) spans Thr525–Glu534. Residues Ala590–Glu777 enclose the Reticulon domain. 2 helical membrane passes run Ile604–Val624 and Phe706–Leu726.

In terms of assembly, interacts with NDRG1. Interacts with BACE1. Interacts with TMEM33. As to quaternary structure, interacts with UGCG; regulates the ceramide glucosyltransferase activity of UGCG. Expressed predominantly in central and peripheral nervous system of newborn and adult rats. Low levels have been also detected in heart, adrenal gland and spleen. Expression of isoform RTN1-B is restricted to particular neuronal types.

It localises to the endoplasmic reticulum membrane. The protein resides in the golgi apparatus membrane. Its function is as follows. Inhibits amyloid precursor protein processing, probably by blocking BACE1 activity. This is Reticulon-1 (Rtn1) from Rattus norvegicus (Rat).